Here is a 433-residue protein sequence, read N- to C-terminus: Oxidoreductase acuF (433 aa).

The protein operates within secondary metabolite biosynthesis. In terms of biological role, oxidoreductase; part of the gene cluster that mediates the biosynthesis of aculins. The pathway begins with the synthesis of 6-methylsalicylic acid by the polyketide synthase (PKS) acuA via condensation of acetate and malonate units. The 6-methylsalicylic acid decarboxylase acuB then catalyzes the decarboxylation of 6-methylsalicylic acid to yield m-cresol (also known as 3-methylphenol). These first reactions occur in the cytosol. The intermediate m-cresol is then transported into the endoplasmic reticulum where the cytochrome P450 monooxygenase acuC converts it to m-hydroxybenzyl alcohol, which is further converted to gentisyl alcohol by the cytochrome P450 monooxygenase acuD. Gentisyl alcohol is further oxidized by the oxidoreductase acuE that probably catalyzes hydroxylation of the aromatic ring. The aromatic system might then be opened by oxidation through a Baeyer-Villiger type of oxidation, which could be catalyzed by acuF, with the carboxylic acid at C-1 subsequently reduced to an aldehyde by acuG. Subsequently, a hemiacetal is formed, before the dehydrogenase acuH would reduce the double bond between C-4 and C-6. Finally, keto-enol tautomerism results in formation of aculinic acid, which exists as two diastereomers (both R/S configurations at C-1) by non-enzymatic hemiacetal formation. The carboxypeptidase acuI could be involved in the linking of aculinic acid to an aculene A moiety produced by the aculene biosynthesis cluster and which leads to the production of aculin A. AcuI may also be involved in the attachment of proline to aculinic acid to form epi-aculins A and B. The chain is Oxidoreductase acuF from Aspergillus aculeatus (strain ATCC 16872 / CBS 172.66 / WB 5094).